The chain runs to 1564 residues: ATP-dependent permease PDR10 (1564 aa).

Residues 1–16 (MLQAPSSSNSGLNQGN) are compositionally biased toward polar residues. The segment at 1 to 37 (MLQAPSSSNSGLNQGNAAPDGPPNETQPYEGLDAAAQ) is disordered. At 1 to 587 (MLQAPSSSNS…AAIFFAILFN (587 aa)) the chain is on the cytoplasmic side. The ABC transporter 1 domain occupies 174–430 (ISRRLFHRTH…FQRMGYVCPE (257 aa)). 5 consecutive transmembrane segments (helical) span residues 588–608 (AFSSLLEIFSLYETRPITEKH), 624–644 (TFSDVPTKLATAVTFNIPYYF), 674–694 (RCIGSVSKTLPQAMVPASVLL), 699–719 (MYTGFAIPRVQMLGWSKWISY), and 732–752 (INEFHGRNFPCAQYIPSGPNY). Asparagine 754 carries an N-linked (GlcNAc...) asparagine glycan. Positions 839 to 849 (KGIVSEKKKKN) are enriched in basic residues. The disordered stretch occupies residues 839 to 872 (KGIVSEKKKKNQPTLSTSDAEKDVEMNNNSSATD). The helical transmembrane segment at 841 to 861 (IVSEKKKKNQPTLSTSDAEKD) threads the bilayer. The Cytoplasmic portion of the chain corresponds to 862–1304 (VEMNNNSSAT…IFMFTVVFNP (443 aa)). The ABC transporter 2 domain maps to 923–1166 (FHWKNLCYDI…MINYFEAHGA (244 aa)). Residue 959 to 966 (GASGAGKT) coordinates ATP. The next 6 membrane-spanning stretches (helical) occupy residues 1305–1325 (ILQQYLPLFVQQRELYEARER), 1340–1360 (ILVEIPWNLLAGTIAFFVYYY), 1390–1410 (VYISSMGVLVISCIEIAENAA), 1426–1446 (VLATPNILPRFWIFMYRVSPL), 1459–1479 (ANASVVCSSNELLKIVPPSGM), and 1491–1511 (STGTGYLLDGSSETECHFCQF). The Cytoplasmic portion of the chain corresponds to 1512–1564 (SSTNDYLATVSSSYSRRWMNYGIFSAYIVFDYCAAIFLYWLVRVPKKSKKLKK).

Belongs to the ABC transporter superfamily. ABCG family. PDR (TC 3.A.1.205) subfamily.

Its subcellular location is the membrane. In Saccharomyces cerevisiae (strain ATCC 204508 / S288c) (Baker's yeast), this protein is ATP-dependent permease PDR10 (PDR10).